A 468-amino-acid chain; its full sequence is E3 ubiquitin-protein ligase TRIM11 (468 aa).

Residues cysteine 16–arginine 57 form an RING-type zinc finger. Position 85 is a phosphoserine (serine 85). The B box-type zinc-finger motif lies at valine 87–leucine 128. The Zn(2+) site is built by cysteine 92, histidine 95, cysteine 114, and histidine 120. Residues leucine 128–glutamate 233 are a coiled coil. Residues glutamate 268–proline 461 enclose the B30.2/SPRY domain. Lysine 458 is covalently cross-linked (Glycyl lysine isopeptide (Lys-Gly) (interchain with G-Cter in ubiquitin)).

Belongs to the TRIM/RBCC family. In terms of assembly, binds cytoplasmic tail of integrin alpha-1. Interacts with the HN peptide. Interacts with PHOX2B. Interacts (when autoubiquitinated) with SQSTM1/p62; promoting AIM2 recruitment to autophagosomes. Interacts with AIM2; promoting its autophagy-dependent degradation. In terms of processing, autoubiquitinated upon DNA stimulation; autoubiquitination promotes interaction with SQSTM1/p62 and recruitment of AIM2 to autophagosomes.

Its subcellular location is the cytoplasm. The protein resides in the nucleus. It catalyses the reaction S-ubiquitinyl-[E2 ubiquitin-conjugating enzyme]-L-cysteine + [acceptor protein]-L-lysine = [E2 ubiquitin-conjugating enzyme]-L-cysteine + N(6)-ubiquitinyl-[acceptor protein]-L-lysine.. The protein operates within protein modification; protein ubiquitination. In terms of biological role, E3 ubiquitin-protein ligase that promotes the degradation of insoluble ubiquitinated proteins, including insoluble PAX6, poly-Gln repeat expanded HTT and poly-Ala repeat expanded ARX. Mediates PAX6 ubiquitination leading to proteasomal degradation, thereby modulating cortical neurogenesis. May also inhibit PAX6 transcriptional activity, possibly in part by preventing the binding of PAX6 to its consensus sequences. May contribute to the regulation of the intracellular level of HN (humanin) or HN-containing proteins through the proteasomal degradation pathway. Mediates MED15 ubiquitination leading to proteasomal degradation. May contribute to the innate restriction of retroviruses. Upon overexpression, reduces HIV-1 and murine leukemia virus infectivity, by suppressing viral gene expression. Antiviral activity depends on a functional E3 ubiquitin-protein ligase domain. May regulate TRIM5 turnover via the proteasome pathway, thus counteracting the TRIM5-mediated cross-species restriction of retroviral infection at early stages of the retroviral life cycle. Acts as an inhibitor of the AIM2 inflammasome by promoting autophagy-dependent degradation of AIM2. Mechanistically, undergoes autoubiquitination upon DNA stimulation, promoting interaction with AIM2 and SQSTM1/p62, leading to AIM2 recruitment to autophagosomes. This chain is E3 ubiquitin-protein ligase TRIM11 (TRIM11), found in Bos taurus (Bovine).